The chain runs to 693 residues: MKNNLKYTRNIGIAAHIDAGKTTTTERILFYTGINHKIGEVHDGTATMDWMEQEQERGITITSAATKCEWLYNNNIYKINIIDTPGHVDFTVEVERSLRVLDGMVALFSAVDGVEPQSETVWRQADKYKVPRIGFVNKMDRQGADFFNVCEQIKSNLGANCLILQIPIGIEDNFQGVVDIISKKAIIWDEKNYGTSYNIRTIPEELLELTNKYRNILIETISEYDYDIMGKYFSNPNEISENDIISSIKKSTINLDIVPIICGSSFKNKGVQVMLDAICRYLPSPIDIKETKGINPKTEKEEIRKHNSKEPFSALAFKIATDSFVGRLAFFRVYSGQLKSGTYILNSRSGNKERISRIYQMHANKQNPVNIIEAGDIGAAVGFKDIKTGDTLCDENYPIIYENISFPDPVIGLAIEPKYKSDIDKMSLALSKLSEEDPTFIVRNDKYTGQTIISGMGELHLEIILDRMEREFKVKVNKGNPQVEYKEALTNSIEHREIYKKQTGGRGKYADILFKLEPGKKGAQGLEFINKVKGGNIPKEYIPSIEKAFKEAMKNGPLYGYEINNARIILIDGSYHSVDSDQLSFELASKIGFKNAAKKTNPIILEPIMKLEVLTPPENMGNIVGDINRRRGIIQGMEENRSNSKIIKALVPLSELFGYVTILRTLSSGRATSTMEFYKYKPKPAPYNILNKK.

The 281-residue stretch at 6–286 folds into the tr-type G domain; it reads KYTRNIGIAA…AICRYLPSPI (281 aa). Residues 15–22, 83–87, and 137–140 each bind GTP; these read AHIDAGKT, DTPGH, and NKMD.

Belongs to the TRAFAC class translation factor GTPase superfamily. Classic translation factor GTPase family. EF-G/EF-2 subfamily.

It localises to the cytoplasm. In terms of biological role, catalyzes the GTP-dependent ribosomal translocation step during translation elongation. During this step, the ribosome changes from the pre-translocational (PRE) to the post-translocational (POST) state as the newly formed A-site-bound peptidyl-tRNA and P-site-bound deacylated tRNA move to the P and E sites, respectively. Catalyzes the coordinated movement of the two tRNA molecules, the mRNA and conformational changes in the ribosome. This is Elongation factor G from Karelsulcia muelleri (strain GWSS) (Sulcia muelleri).